Consider the following 414-residue polypeptide: Small ribosomal subunit protein mS46 (414 aa).

The segment covering 20–35 has biased composition (polar residues); that stretch reads LNAQQQQRPFSSTTTR. Disordered regions lie at residues 20 to 71 and 168 to 229; these read LNAQ…EAAV and AGPG…DAPP. Composition is skewed to low complexity over residues 45–59 and 168–200; these read PAAA…APGP and AGPG…PFGA. The span at 205-224 shows a compositional bias: basic and acidic residues; that stretch reads PAGDKKRSGGSGDKRPRGDD.

The protein belongs to the mitochondrion-specific ribosomal protein mS46 family. Component of the mitochondrial small ribosomal subunit (mt-SSU). Mature N.crassa 74S mitochondrial ribosomes consist of a small (37S) and a large (54S) subunit. The 37S small subunit contains a 16S ribosomal RNA (16S mt-rRNA) and 32 different proteins. The 54S large subunit contains a 23S rRNA (23S mt-rRNA) and 42 different proteins.

The protein resides in the mitochondrion. In terms of biological role, component of the mitochondrial ribosome (mitoribosome), a dedicated translation machinery responsible for the synthesis of mitochondrial genome-encoded proteins, including at least some of the essential transmembrane subunits of the mitochondrial respiratory chain. The mitoribosomes are attached to the mitochondrial inner membrane and translation products are cotranslationally integrated into the membrane. The chain is Small ribosomal subunit protein mS46 (rsm28) from Neurospora crassa (strain ATCC 24698 / 74-OR23-1A / CBS 708.71 / DSM 1257 / FGSC 987).